A 766-amino-acid chain; its full sequence is FYVE, RhoGEF and PH domain-containing protein 4 (766 aa).

Positions methionine 1 to asparagine 150 are actin filament-binding. Composition is skewed to polar residues over residues serine 43 to lysine 65, arginine 132 to asparagine 145, and cysteine 152 to threonine 161. Residues serine 43–serine 167 are disordered. The DH domain occupies lysine 206 to alanine 393. The region spanning glutamate 422–aspartate 521 is the PH 1 domain. The segment at aspartate 559 to serine 619 adopts an FYVE-type zinc-finger fold. 8 residues coordinate Zn(2+): cysteine 565, cysteine 568, cysteine 582, cysteine 585, cysteine 590, cysteine 593, cysteine 611, and cysteine 614. The PH 2 domain maps to asparagine 643–threonine 740. 2 positions are modified to phosphoserine: serine 702 and serine 716. Residues aspartate 745 to cysteine 766 form a disordered region.

As to quaternary structure, homooligomer. In terms of tissue distribution, detected in brain, lung, liver, skeletal muscle, kidney, testis and cultured hippocampal neurons.

The protein localises to the cytoplasm. It localises to the cytoskeleton. The protein resides in the cell projection. It is found in the filopodium. Activates CDC42, a member of the Ras-like family of Rho- and Rac proteins, by exchanging bound GDP for free GTP. Plays a role in regulating the actin cytoskeleton and cell shape. Activates MAPK8. This chain is FYVE, RhoGEF and PH domain-containing protein 4 (Fgd4), found in Rattus norvegicus (Rat).